The following is a 593-amino-acid chain: Probable serine/threonine-protein kinase samkB (593 aa).

In terms of domain architecture, SAM spans 29 to 93; it reads WNNEAVCEWL…SIFKKLKNNN (65 aa). Residues 108–157 are disordered; it reads ESNSINNSNNNNNNNNNNNNNNNNNNNNNNNNNNNNNNNNNNNNNNKIDT. A compositionally biased stretch (low complexity) spans 113-153; it reads NNSNNNNNNNNNNNNNNNNNNNNNNNNNNNNNNNNNNNNNN. The Protein kinase domain occupies 186-438; sequence YKLIEEIGRG…SKQLLEAQWF (253 aa). Residues 192-200 and K216 each bind ATP; that span reads IGRGAFSIV. D313 serves as the catalytic Proton acceptor.

Belongs to the protein kinase superfamily. Ser/Thr protein kinase family.

The enzyme catalyses L-seryl-[protein] + ATP = O-phospho-L-seryl-[protein] + ADP + H(+). It carries out the reaction L-threonyl-[protein] + ATP = O-phospho-L-threonyl-[protein] + ADP + H(+). The protein is Probable serine/threonine-protein kinase samkB (samkB) of Dictyostelium discoideum (Social amoeba).